The primary structure comprises 501 residues: Cobyric acid synthase (501 aa).

In terms of domain architecture, GATase cobBQ-type spans 252–443 (DLDVAVIDLD…LHGIFDNPYW (192 aa)). Catalysis depends on Cys-333, which acts as the Nucleophile. The active site involves His-435.

Belongs to the CobB/CobQ family. CobQ subfamily.

It participates in cofactor biosynthesis; adenosylcobalamin biosynthesis. Catalyzes amidations at positions B, D, E, and G on adenosylcobyrinic A,C-diamide. NH(2) groups are provided by glutamine, and one molecule of ATP is hydrogenolyzed for each amidation. The chain is Cobyric acid synthase from Limosilactobacillus reuteri (strain DSM 20016) (Lactobacillus reuteri).